We begin with the raw amino-acid sequence, 417 residues long: Putative competence-damage inducible protein (417 aa).

The protein belongs to the CinA family.

The chain is Putative competence-damage inducible protein from Shouchella clausii (strain KSM-K16) (Alkalihalobacillus clausii).